The primary structure comprises 833 residues: Protein translocase subunit SecA (833 aa).

ATP is bound by residues glutamine 87, 105–109 (GEGKT), and aspartate 494. The disordered stretch occupies residues 789–816 (PAAVAYSGGEAEAGPAQPHREDPKVGRN). Positions 806–815 (PHREDPKVGR) are enriched in basic and acidic residues. Residues cysteine 819, cysteine 821, cysteine 830, and cysteine 831 each coordinate Zn(2+).

It belongs to the SecA family. Monomer and homodimer. Part of the essential Sec protein translocation apparatus which comprises SecA, SecYEG and auxiliary proteins SecDF-YajC and YidC. The cofactor is Zn(2+).

It localises to the cell inner membrane. The protein localises to the cytoplasm. It catalyses the reaction ATP + H2O + cellular proteinSide 1 = ADP + phosphate + cellular proteinSide 2.. Functionally, part of the Sec protein translocase complex. Interacts with the SecYEG preprotein conducting channel. Has a central role in coupling the hydrolysis of ATP to the transfer of proteins into and across the cell membrane, serving as an ATP-driven molecular motor driving the stepwise translocation of polypeptide chains across the membrane. This is Protein translocase subunit SecA from Nitratidesulfovibrio vulgaris (strain DP4) (Desulfovibrio vulgaris).